The chain runs to 413 residues: Putative F-box/kelch-repeat protein At4g22430 (413 aa).

Residues asparagine 5–leucine 54 form the F-box domain. A Kelch repeat occupies asparagine 168–leucine 210.

The protein is Putative F-box/kelch-repeat protein At4g22430 of Arabidopsis thaliana (Mouse-ear cress).